A 1436-amino-acid polypeptide reads, in one-letter code: MAP kinase kinase kinase win1 (1436 aa).

The disordered stretch occupies residues 56–85 (LELPNNGKEENHRRPSVARSSSDRSKASAK). Positions 76–85 (SSDRSKASAK) are enriched in basic and acidic residues. A Phosphoserine modification is found at S224. Phosphothreonine is present on T226. An interaction with tea4 region spans residues 282 to 1123 (EDSDLDSETS…SNITIRWQQG (842 aa)). Positions 1120–1406 (WQQGGLIGSG…AAELLMDPWV (287 aa)) constitute a Protein kinase domain. Residues 1126-1134 (IGSGSFGTV) and K1149 each bind ATP. The active-site Proton acceptor is D1244.

The protein belongs to the protein kinase superfamily. STE Ser/Thr protein kinase family. MAP kinase kinase kinase subfamily. In terms of assembly, interacts with tea4.

It carries out the reaction L-seryl-[protein] + ATP = O-phospho-L-seryl-[protein] + ADP + H(+). The enzyme catalyses L-threonyl-[protein] + ATP = O-phospho-L-threonyl-[protein] + ADP + H(+). In terms of biological role, involved in a signal transduction pathway that is activated by changes in the osmolarity of the extracellular environment. Activates the wis1 MAP kinase kinase by phosphorylation. The polypeptide is MAP kinase kinase kinase win1 (win1) (Schizosaccharomyces pombe (strain 972 / ATCC 24843) (Fission yeast)).